A 396-amino-acid chain; its full sequence is Elongation factor Tu 1 (396 aa).

One can recognise a tr-type G domain in the interval 10-206 (KPHVNVGTIG…ALDSYIPLPE (197 aa)). A G1 region spans residues 19–26 (GHVDHGKT). Residue 19–26 (GHVDHGKT) coordinates GTP. Thr26 serves as a coordination point for Mg(2+). A G2 region spans residues 60–64 (GITIN). A G3 region spans residues 81-84 (DCPG). Residues 81 to 85 (DCPGH) and 136 to 139 (NKCD) each bind GTP. The G4 stretch occupies residues 136 to 139 (NKCD). The G5 stretch occupies residues 174-176 (SAK).

It belongs to the TRAFAC class translation factor GTPase superfamily. Classic translation factor GTPase family. EF-Tu/EF-1A subfamily. Monomer.

The protein resides in the cytoplasm. The catalysed reaction is GTP + H2O = GDP + phosphate + H(+). In terms of biological role, GTP hydrolase that promotes the GTP-dependent binding of aminoacyl-tRNA to the A-site of ribosomes during protein biosynthesis. This Albidiferax ferrireducens (strain ATCC BAA-621 / DSM 15236 / T118) (Rhodoferax ferrireducens) protein is Elongation factor Tu 1.